Consider the following 102-residue polypeptide: Small ribosomal subunit protein uS10 (102 aa).

It belongs to the universal ribosomal protein uS10 family. Part of the 30S ribosomal subunit.

Involved in the binding of tRNA to the ribosomes. This is Small ribosomal subunit protein uS10 from Latilactobacillus sakei subsp. sakei (strain 23K) (Lactobacillus sakei subsp. sakei).